A 405-amino-acid polypeptide reads, in one-letter code: Pre-mRNA-splicing factor cwc-24 (405 aa).

Disordered stretches follow at residues 1–114 and 162–184; these read MADT…NTIY and TKKK…DGTY. The segment covering 15-29 has biased composition (low complexity); that stretch reads EPTTATPTAPIAPVA. Residues 31-46 show a composition bias toward basic residues; the sequence is FKKRGAKGKANLRKRP. The span at 56–70 shows a compositional bias: acidic residues; that stretch reads SDDDSSDFESSEDEA. Over residues 74–83 the composition is skewed to basic residues; it reads RIKRRKKNHH. Residues 221 to 249 form a C3H1-type zinc finger; the sequence is DMAPDVCKDYKQTGFCGFGDNCKFLHARE. An RING-type zinc finger spans residues 310-349; it reads CIICRGPYSNSPVVTRCGHYFCEACALKRYRKDPSCAACG. Over residues 370 to 386 the composition is skewed to basic and acidic residues; that stretch reads KARAERLRREARERGEE. Positions 370 to 405 are disordered; the sequence is KARAERLRREARERGEEVSEEEDEGEDEGEGAEGSD. Residues 387–405 are compositionally biased toward acidic residues; the sequence is VSEEEDEGEDEGEGAEGSD.

Belongs to the CWC24 family. In terms of assembly, associated with the spliceosome.

It is found in the nucleus. Functionally, involved in pre-mRNA splicing. The polypeptide is Pre-mRNA-splicing factor cwc-24 (cwc-24) (Neurospora crassa (strain ATCC 24698 / 74-OR23-1A / CBS 708.71 / DSM 1257 / FGSC 987)).